We begin with the raw amino-acid sequence, 681 residues long: Minichromosome maintenance domain-containing protein 2 (681 aa).

At S292 the chain carries Phosphoserine. Positions 533 to 621 (RQFTTEDFEK…LIAALLFETS (89 aa)) constitute an MCM domain.

Its function is as follows. Plays an important role in meiotic recombination and associated DNA double-strand break repair. This Homo sapiens (Human) protein is Minichromosome maintenance domain-containing protein 2 (MCMDC2).